A 1024-amino-acid chain; its full sequence is Protein tiptop (1024 aa).

The segment covering 20 to 35 (ELTSPRCQSRDSNTSA) has biased composition (polar residues). Disordered regions lie at residues 20-40 (ELTSPRCQSRDSNTSAGAGAG) and 138-215 (EGEV…ISAD). The segment covering 159-175 (DDQEEDQEQDQEQEQEQ) has biased composition (acidic residues). A C2H2-type 1 zinc finger spans residues 317–341 (FKCVWCKQSFSTLANLTAHMKETQH). Residues 350 to 392 (LPTGGVGTPSAPPPTRLATSASNSACSSSSSSTSSSSNSSKSE) form a disordered region. Low complexity predominate over residues 368–391 (TSASNSACSSSSSSTSSSSNSSKS). The segment at 426–450 (LKCMWCGQSFRSLAEMTSHMQETQH) adopts a C2H2-type 2 zinc-finger fold. Disordered stretches follow at residues 466-489 (GDERERPTNTGVPSTSTAAPSSPS), 519-576 (AQKS…SLDS), 712-759 (SRDR…IKAE), 786-818 (FSMEACRESPRSVSKSPAPQTERSPPDNGSLLA), and 868-891 (ETTDPPSTGLRSASSAGSSTASAT). Positions 477–489 (VPSTSTAAPSSPS) are enriched in low complexity. The segment at 499 to 523 (LTCKVCDQAFGSLKELSTHMAQKSH) adopts a C2H2-type 3 zinc-finger fold. The span at 527–537 (SPAPSASPPAA) shows a compositional bias: low complexity. A compositionally biased stretch (basic residues) spans 543-558 (KRGRQNRNEKRKKSLP). The span at 718 to 729 (SESSSASRVESS) shows a compositional bias: low complexity. The segment covering 745–755 (TPAPPPPPPPT) has biased composition (pro residues). The segment covering 786–795 (FSMEACRESP) has biased composition (basic and acidic residues). Positions 796-808 (RSVSKSPAPQTER) are enriched in polar residues. Residues 874–891 (STGLRSASSAGSSTASAT) show a composition bias toward low complexity. The segment at 926–949 (IKCSYCDTPFASKGAYRHHLSKVH) adopts a C2H2-type 4 zinc-finger fold. The segment at 954-1004 (AGEDSPRLKSPAVQSPRSMPLASPRRSASRSPATGSQQPPPSPTISPYDES) is disordered. The span at 968–990 (SPRSMPLASPRRSASRSPATGSQ) shows a compositional bias: low complexity.

Belongs to the teashirt C2H2-type zinc-finger protein family. Expression in the Malpighian tubules (MTs) and stomatogastric nervous system starts at embryonic stage 10. At stage 11, expression in the head domain is initiated in the clypeolabrum in two bilaterally symmetric clusters of cells. At stage 12, expression appears in the central nervous system (CNS) of the trunk and the epidermis. The staining in the hindgut is maintained throughout embryogenesis. At stage 13, expression is present in elongating MTs. The anterior staining is detected in cells that invaginate into the stomodeum and by stage 15 onwards, in cells close to the pharynx. Also expressed in cells of the brain, the second constriction of the gut, the trunk epidermis, the anterior segments of the CNS (the three thoracic and the first two abdominal segments) and in the MTs. From stage 12 onwards, tsh and tio are colocalized in some cells.

The protein resides in the nucleus. In terms of biological role, tiptop (tio) and teashirt (tsh) have, on the whole, common activities. Tio and tsh repress each other's expression and tsh has a crucial role for trunk patterning that is in part masked by ectopic expression of tiptop. Both genes share a common activity required for the activation of Ser and svb and the maintenance of en and wg. The sequence is that of Protein tiptop (tio) from Drosophila melanogaster (Fruit fly).